A 340-amino-acid chain; its full sequence is Lipase chaperone (340 aa).

Residues 4–24 (ILLLIPLAFAASLAWFVWLEP) traverse the membrane as a helical segment. The tract at residues 29–51 (ETAPPASPQAGADRAPPAASAGE) is disordered. The segment covering 36–51 (PQAGADRAPPAASAGE) has biased composition (low complexity).

The protein belongs to the lipase chaperone family.

Its subcellular location is the cell inner membrane. Its function is as follows. May be involved in the folding of the extracellular lipase during its passage through the periplasm. The protein is Lipase chaperone (lifO) of Pseudomonas aeruginosa (strain ATCC 15692 / DSM 22644 / CIP 104116 / JCM 14847 / LMG 12228 / 1C / PRS 101 / PAO1).